Here is a 431-residue protein sequence, read N- to C-terminus: 23S rRNA (uracil(1939)-C(5))-methyltransferase RlmD (431 aa).

In terms of domain architecture, TRAM spans Arg10–Arg68. [4Fe-4S] cluster is bound by residues Cys81, Cys87, Cys90, and Cys161. The S-adenosyl-L-methionine site is built by Gln264, Phe293, Asn298, Glu314, Asn341, and Asp362. Catalysis depends on Cys388, which acts as the Nucleophile.

The protein belongs to the class I-like SAM-binding methyltransferase superfamily. RNA M5U methyltransferase family. RlmD subfamily.

It carries out the reaction uridine(1939) in 23S rRNA + S-adenosyl-L-methionine = 5-methyluridine(1939) in 23S rRNA + S-adenosyl-L-homocysteine + H(+). Its function is as follows. Catalyzes the formation of 5-methyl-uridine at position 1939 (m5U1939) in 23S rRNA. This is 23S rRNA (uracil(1939)-C(5))-methyltransferase RlmD from Salmonella choleraesuis (strain SC-B67).